A 290-amino-acid polypeptide reads, in one-letter code: UPF0761 membrane protein YihY (290 aa).

Helical transmembrane passes span 44–64 (LLSL…FPMF), 104–124 (VGAC…DSAL), 140–160 (FAVY…SLAI), 183–203 (IFPL…VPTI), 210–230 (AIVG…GFAL), and 244–264 (VLAV…IVLL).

It belongs to the UPF0761 family.

It localises to the cell inner membrane. This is UPF0761 membrane protein YihY from Shigella sonnei (strain Ss046).